The primary structure comprises 1345 residues: Aldehyde oxidase 2 (1345 aa).

Residues 9-96 (DDLEFFVNGR…GAAVTTVEGV (88 aa)) enclose the 2Fe-2S ferredoxin-type domain. [2Fe-2S] cluster contacts are provided by Cys48, Cys53, Cys56, and Cys78. Residue Gln117 participates in Mo-molybdopterin binding. Residues Cys118, Cys121, Cys153, and Cys155 each contribute to the [2Fe-2S] cluster site. Cys155 contributes to the Mo-molybdopterin binding site. An FAD-binding PCMH-type domain is found at 238 to 423 (FYGERITWIA…GSVYIPHSQK (186 aa)). Residues 266 to 273 (LISGNTAL), Ala347, Ser356, His360, Asp369, and Leu413 contribute to the FAD site. Residues 812-813 (GF), 1094-1097 (ASVG), Gln1209, and Leu1274 contribute to the Mo-molybdopterin site. The Proton acceptor; for azaheterocycle hydroxylase activity role is filled by Glu1276.

This sequence belongs to the xanthine dehydrogenase family. Homodimer. It depends on [2Fe-2S] cluster as a cofactor. Requires FAD as cofactor. Mo-molybdopterin serves as cofactor. As to expression, expressed in olfactory mucosa epithelium (at protein level). Detected in skin.

It is found in the cytoplasm. The catalysed reaction is an aldehyde + O2 + H2O = a carboxylate + H2O2 + H(+). Its function is as follows. Oxidase with broad substrate specificity, oxidizing aromatic azaheterocycles, such as phthalazine, as well as aldehydes, such as benzaldehyde and retinal. Cannot use hypoxanthine as substrate. The polypeptide is Aldehyde oxidase 2 (Aox2) (Mus musculus (Mouse)).